The sequence spans 214 residues: dITP/XTP pyrophosphatase (214 aa).

13 to 18 contributes to the substrate binding site; sequence SHNAGK. Residues Asp-45 and Asp-74 each contribute to the Mg(2+) site. The active-site Proton acceptor is Asp-74. Substrate is bound by residues Ser-75, 163-166, Lys-186, and 199-200; these read FGYD and HR.

The protein belongs to the HAM1 NTPase family. In terms of assembly, homodimer. It depends on Mg(2+) as a cofactor.

The catalysed reaction is XTP + H2O = XMP + diphosphate + H(+). The enzyme catalyses dITP + H2O = dIMP + diphosphate + H(+). It catalyses the reaction ITP + H2O = IMP + diphosphate + H(+). In terms of biological role, pyrophosphatase that catalyzes the hydrolysis of nucleoside triphosphates to their monophosphate derivatives, with a high preference for the non-canonical purine nucleotides XTP (xanthosine triphosphate), dITP (deoxyinosine triphosphate) and ITP. Seems to function as a house-cleaning enzyme that removes non-canonical purine nucleotides from the nucleotide pool, thus preventing their incorporation into DNA/RNA and avoiding chromosomal lesions. The protein is dITP/XTP pyrophosphatase of Rhizobium meliloti (strain 1021) (Ensifer meliloti).